Reading from the N-terminus, the 524-residue chain is Solute carrier family 35 member F5 (524 aa).

2 helical membrane passes run 69–89 and 101–121; these read MALG…SSEL and FFST…FIIW. S207 is modified (phosphoserine). 8 consecutive transmembrane segments (helical) span residues 244–264, 269–289, 297–317, 328–348, 362–382, 396–416, 421–441, and 453–473; these read ISFF…EALS, AIVN…AAVF, FTLS…LVNL, TIGS…IVMI, MFFG…FFLL, VVLL…EFLW, FLTS…LSII, and WLFF…TLLC. The region spanning 253–317 is the EamA domain; it reads FLANLSYQEA…SIGGVVLVNL (65 aa).

The protein belongs to the SLC35F solute transporter family.

It is found in the membrane. Its function is as follows. Putative solute transporter. The polypeptide is Solute carrier family 35 member F5 (Slc35f5) (Mus musculus (Mouse)).